The sequence spans 136 residues: uncharacterized protein (136 aa).

A helical membrane pass occupies residues Leu40 to Val62.

Its subcellular location is the membrane. This is an uncharacterized protein from Homo sapiens (Human).